Reading from the N-terminus, the 292-residue chain is MFTGSIVAIVTPMDEKGNVCRASLKKLIDYHVASGTSAIVSVGTTGESATLNHDEHADVVMMTLELANGRIPVIAGTGANATAEAISLTQRFNDSGIVGCLTVTPYYNRPSQEGLYQHFKAIAEHTDLPQILYNVPSRTGCDLLPETVGRLAKVKNIIGIKEATGNLTRVNQIKELVSDDFVLLSGDDVSALDFMQLGGHGVISVTANVAARDMAQMCKLAAEGHFAEARVINQRLMPLHNKLFVEPNPIPVKWACKELGLVATDTLRLPMTPITDSGRETVRAALKHAGLL.

Pyruvate is bound at residue threonine 45. The active-site Proton donor/acceptor is the tyrosine 133. The active-site Schiff-base intermediate with substrate is lysine 161. Residue isoleucine 203 coordinates pyruvate.

Belongs to the DapA family. As to quaternary structure, homotetramer; dimer of dimers.

The protein localises to the cytoplasm. The enzyme catalyses L-aspartate 4-semialdehyde + pyruvate = (2S,4S)-4-hydroxy-2,3,4,5-tetrahydrodipicolinate + H2O + H(+). The protein operates within amino-acid biosynthesis; L-lysine biosynthesis via DAP pathway; (S)-tetrahydrodipicolinate from L-aspartate: step 3/4. Catalyzes the condensation of (S)-aspartate-beta-semialdehyde [(S)-ASA] and pyruvate to 4-hydroxy-tetrahydrodipicolinate (HTPA). The sequence is that of 4-hydroxy-tetrahydrodipicolinate synthase from Shigella dysenteriae serotype 1 (strain Sd197).